Here is a 441-residue protein sequence, read N- to C-terminus: Protein FAM83A (441 aa).

2 disordered regions span residues 81 to 108 (SNDNQTEGENGSAANGNKSESYYPMNSD) and 312 to 368 (GMSI…SPLQ). Residues 314 to 327 (SIMSDSNPESINTT) are compositionally biased toward polar residues. The segment covering 328-354 (SEPFSSISTASISNDSQRPKSPVSTTP) has biased composition (low complexity).

This sequence belongs to the FAM83 family.

The protein localises to the cytoplasm. Functionally, may function in the epidermal growth factor receptor/EGFR signaling pathway. The protein is Protein FAM83A of Xenopus tropicalis (Western clawed frog).